The sequence spans 495 residues: Adenosylhomocysteinase (495 aa).

Positions 71, 156, and 218 each coordinate substrate. NAD(+) is bound at residue 219-221; it reads TTT. Substrate-binding residues include lysine 248 and aspartate 252. Residues asparagine 253, 282–287, glutamate 305, asparagine 340, 361–363, and asparagine 409 each bind NAD(+); these read GYGDVG and IGH.

It belongs to the adenosylhomocysteinase family. The cofactor is NAD(+).

The protein localises to the cytoplasm. The enzyme catalyses S-adenosyl-L-homocysteine + H2O = L-homocysteine + adenosine. Its pathway is amino-acid biosynthesis; L-homocysteine biosynthesis; L-homocysteine from S-adenosyl-L-homocysteine: step 1/1. In terms of biological role, may play a key role in the regulation of the intracellular concentration of adenosylhomocysteine. The protein is Adenosylhomocysteinase of Mycobacterium tuberculosis (strain ATCC 25177 / H37Ra).